A 433-amino-acid polypeptide reads, in one-letter code: GTPase Der (433 aa).

EngA-type G domains lie at 3–167 (NIVA…QDTI) and 174–349 (PKIA…TNKT). GTP contacts are provided by residues 9–16 (GRPNVGKS), 56–60 (DTGGY), 119–122 (NKAD), 180–187 (GRPNVGKS), 227–231 (DTAGI), and 292–295 (NKWD). One can recognise a KH-like domain in the interval 350 to 433 (QKISTAALNQ…VPVQLVFRKK (84 aa)).

Belongs to the TRAFAC class TrmE-Era-EngA-EngB-Septin-like GTPase superfamily. EngA (Der) GTPase family. In terms of assembly, associates with the 50S ribosomal subunit.

GTPase that plays an essential role in the late steps of ribosome biogenesis. This is GTPase Der from Amoebophilus asiaticus (strain 5a2).